Here is a 329-residue protein sequence, read N- to C-terminus: uncharacterized protein (329 aa).

7 consecutive transmembrane segments (helical) span residues 29 to 49 (IVLW…AISH), 78 to 98 (VLVA…CWMG), 120 to 140 (KKWL…SLLV), 164 to 184 (WMIG…LIYL), 217 to 237 (YFFL…LLVI), 260 to 280 (FFWT…SFIV), and 299 to 319 (GSSL…LLFI).

To M.pneumoniae MPN_129.

Its subcellular location is the cell membrane. This is an uncharacterized protein from Mycoplasma pneumoniae (strain ATCC 29342 / M129 / Subtype 1) (Mycoplasmoides pneumoniae).